Consider the following 197-residue polypeptide: Imidazoleglycerol-phosphate dehydratase (197 aa).

Belongs to the imidazoleglycerol-phosphate dehydratase family.

It is found in the cytoplasm. It carries out the reaction D-erythro-1-(imidazol-4-yl)glycerol 3-phosphate = 3-(imidazol-4-yl)-2-oxopropyl phosphate + H2O. It functions in the pathway amino-acid biosynthesis; L-histidine biosynthesis; L-histidine from 5-phospho-alpha-D-ribose 1-diphosphate: step 6/9. In Teredinibacter turnerae (strain ATCC 39867 / T7901), this protein is Imidazoleglycerol-phosphate dehydratase.